Here is a 259-residue protein sequence, read N- to C-terminus: Global transcriptional regulator CodY (259 aa).

Residues 1-155 (MSLLSRMRKI…GATVVGMEIL (155 aa)) form a GAF domain region. The H-T-H motif DNA-binding region spans 203–222 (ASKIADRVGITRSVIVNALR). Ser215 is modified (phosphoserine).

It belongs to the CodY family.

The protein localises to the cytoplasm. Functionally, DNA-binding global transcriptional regulator which is involved in the adaptive response to starvation and acts by directly or indirectly controlling the expression of numerous genes in response to nutrient availability. During rapid exponential growth, CodY is highly active and represses genes whose products allow adaptation to nutrient depletion. This Halalkalibacterium halodurans (strain ATCC BAA-125 / DSM 18197 / FERM 7344 / JCM 9153 / C-125) (Bacillus halodurans) protein is Global transcriptional regulator CodY.